A 24-amino-acid chain; its full sequence is uncharacterized protein (24 aa).

Residues 1 to 3 are Cytoplasmic-facing; that stretch reads MKK. The helical transmembrane segment at 4–24 threads the bilayer; it reads TTIIMMGVAIIVVLGTELGWW.

The protein resides in the cell inner membrane. This is an uncharacterized protein from Escherichia coli (strain K12).